A 959-amino-acid polypeptide reads, in one-letter code: Isoleucine--tRNA ligase (959 aa).

A 'HIGH' region motif is present at residues 60–70 (PYANGSLHMGH). Position 569 (glutamate 569) interacts with L-isoleucyl-5'-AMP. Residues 610-614 (KMSKS) carry the 'KMSKS' region motif. Lysine 613 contributes to the ATP binding site. Zn(2+) contacts are provided by cysteine 928, cysteine 931, cysteine 948, and cysteine 951.

It belongs to the class-I aminoacyl-tRNA synthetase family. IleS type 1 subfamily. In terms of assembly, monomer. It depends on Zn(2+) as a cofactor.

The protein resides in the cytoplasm. The enzyme catalyses tRNA(Ile) + L-isoleucine + ATP = L-isoleucyl-tRNA(Ile) + AMP + diphosphate. In terms of biological role, catalyzes the attachment of isoleucine to tRNA(Ile). As IleRS can inadvertently accommodate and process structurally similar amino acids such as valine, to avoid such errors it has two additional distinct tRNA(Ile)-dependent editing activities. One activity is designated as 'pretransfer' editing and involves the hydrolysis of activated Val-AMP. The other activity is designated 'posttransfer' editing and involves deacylation of mischarged Val-tRNA(Ile). The polypeptide is Isoleucine--tRNA ligase (Crocosphaera subtropica (strain ATCC 51142 / BH68) (Cyanothece sp. (strain ATCC 51142))).